A 192-amino-acid chain; its full sequence is A-type ATP synthase subunit E (192 aa).

The protein belongs to the V-ATPase E subunit family. As to quaternary structure, has multiple subunits with at least A(3), B(3), C, D, E, F, H, I and proteolipid K(x).

It is found in the cell membrane. Functionally, component of the A-type ATP synthase that produces ATP from ADP in the presence of a proton gradient across the membrane. The chain is A-type ATP synthase subunit E from Sulfolobus acidocaldarius (strain ATCC 33909 / DSM 639 / JCM 8929 / NBRC 15157 / NCIMB 11770).